A 285-amino-acid chain; its full sequence is Polyamine aminopropyltransferase (285 aa).

The PABS domain maps to 5-238 (EMWYETLHTG…GIMTFAWASD (234 aa)). Glutamine 33 contributes to the S-methyl-5'-thioadenosine binding site. 2 residues coordinate spermidine: histidine 64 and aspartate 88. Residues glutamate 108 and 140–141 (DG) contribute to the S-methyl-5'-thioadenosine site. Catalysis depends on aspartate 158, which acts as the Proton acceptor. 158 to 161 (DCTD) contacts spermidine. Position 165 (proline 165) interacts with S-methyl-5'-thioadenosine.

The protein belongs to the spermidine/spermine synthase family. As to quaternary structure, homodimer or homotetramer.

It localises to the cytoplasm. It carries out the reaction S-adenosyl 3-(methylsulfanyl)propylamine + putrescine = S-methyl-5'-thioadenosine + spermidine + H(+). It functions in the pathway amine and polyamine biosynthesis; spermidine biosynthesis; spermidine from putrescine: step 1/1. Catalyzes the irreversible transfer of a propylamine group from the amino donor S-adenosylmethioninamine (decarboxy-AdoMet) to putrescine (1,4-diaminobutane) to yield spermidine. This Erwinia tasmaniensis (strain DSM 17950 / CFBP 7177 / CIP 109463 / NCPPB 4357 / Et1/99) protein is Polyamine aminopropyltransferase.